A 327-amino-acid polypeptide reads, in one-letter code: tRNA dimethylallyltransferase (327 aa).

An ATP-binding site is contributed by 14-21; sequence GPTASGKT. 16–21 serves as a coordination point for substrate; the sequence is TASGKT. Interaction with substrate tRNA regions lie at residues 39 to 42 and 163 to 167; these read DSAL and QRIQR.

It belongs to the IPP transferase family. In terms of assembly, monomer. The cofactor is Mg(2+).

The catalysed reaction is adenosine(37) in tRNA + dimethylallyl diphosphate = N(6)-dimethylallyladenosine(37) in tRNA + diphosphate. In terms of biological role, catalyzes the transfer of a dimethylallyl group onto the adenine at position 37 in tRNAs that read codons beginning with uridine, leading to the formation of N6-(dimethylallyl)adenosine (i(6)A). The chain is tRNA dimethylallyltransferase from Xanthomonas oryzae pv. oryzae (strain PXO99A).